We begin with the raw amino-acid sequence, 99 residues long: U1-theraphotoxin-Tal1a (99 aa).

Positions 1-22 (MNTIQVIIFAVVLVLTVTVGQA) are cleaved as a signal peptide. The propeptide occupies 23 to 57 (DEDSAETSLLRKLKEAEASLFGQHLEESQHSREKR). 3 disulfides stabilise this stretch: cysteine 58-cysteine 73, cysteine 65-cysteine 78, and cysteine 72-cysteine 93. Residue serine 98 is modified to Serine amide.

The protein belongs to the neurotoxin 14 (magi-1) family. 08 (Ltx-4) subfamily. In terms of tissue distribution, expressed by the venom gland.

It is found in the secreted. In terms of biological role, insecticidal toxin that shows strong lethal effects on American cockroaches (P.americana) and common mealbeetle (T.molitor). Possibly acts by blocking ion channel currents. Also shows significant analgesic effects in mice models of pain including abdominal writhing induced by acetic acid and formalin-induced paw licking tests. In addition, exerts marked inhibition of proliferation of some human tumor cell lines including C8166, Molt-4, A-549, BIU-87, T24, and Calu-6. This Tliltocatl albopilosus (Curlyhair tarantula) protein is U1-theraphotoxin-Tal1a.